The following is a 229-amino-acid chain: Ribonuclease HII (229 aa).

One can recognise an RNase H type-2 domain in the interval 34–223 (WPVAGADEAG…LRKVEDGPQM (190 aa)). 3 residues coordinate a divalent metal cation: aspartate 40, glutamate 41, and aspartate 131.

Belongs to the RNase HII family. It depends on Mn(2+) as a cofactor. The cofactor is Mg(2+).

It localises to the cytoplasm. The catalysed reaction is Endonucleolytic cleavage to 5'-phosphomonoester.. Functionally, endonuclease that specifically degrades the RNA of RNA-DNA hybrids. The protein is Ribonuclease HII of Rhizobium leguminosarum bv. trifolii (strain WSM2304).